Reading from the N-terminus, the 148-residue chain is Large ribosomal subunit protein bL9 (148 aa).

This sequence belongs to the bacterial ribosomal protein bL9 family.

In terms of biological role, binds to the 23S rRNA. The chain is Large ribosomal subunit protein bL9 from Aliarcobacter butzleri (strain RM4018) (Arcobacter butzleri).